We begin with the raw amino-acid sequence, 368 residues long: Phospho-N-acetylmuramoyl-pentapeptide-transferase (368 aa).

9 consecutive transmembrane segments (helical) span residues 30–50 (AAAI…IRYL), 72–92 (LPTM…LLWS), 98–118 (HVWL…IDDY), 139–159 (VALG…SVLM), 170–190 (LTID…TALS), 208–228 (AIVV…VYAT), 238–258 (GGEI…FLWF), 264–286 (EIFM…ALLI), and 345–365 (KIVI…LMTL).

Belongs to the glycosyltransferase 4 family. MraY subfamily. It depends on Mg(2+) as a cofactor.

Its subcellular location is the cell inner membrane. It carries out the reaction UDP-N-acetyl-alpha-D-muramoyl-L-alanyl-gamma-D-glutamyl-meso-2,6-diaminopimeloyl-D-alanyl-D-alanine + di-trans,octa-cis-undecaprenyl phosphate = di-trans,octa-cis-undecaprenyl diphospho-N-acetyl-alpha-D-muramoyl-L-alanyl-D-glutamyl-meso-2,6-diaminopimeloyl-D-alanyl-D-alanine + UMP. It participates in cell wall biogenesis; peptidoglycan biosynthesis. Catalyzes the initial step of the lipid cycle reactions in the biosynthesis of the cell wall peptidoglycan: transfers peptidoglycan precursor phospho-MurNAc-pentapeptide from UDP-MurNAc-pentapeptide onto the lipid carrier undecaprenyl phosphate, yielding undecaprenyl-pyrophosphoryl-MurNAc-pentapeptide, known as lipid I. This chain is Phospho-N-acetylmuramoyl-pentapeptide-transferase, found in Chlorobium luteolum (strain DSM 273 / BCRC 81028 / 2530) (Pelodictyon luteolum).